We begin with the raw amino-acid sequence, 165 residues long: Protein SprT (165 aa).

Residues 19–163 form the SprT-like domain; the sequence is REKLAQANLK…RCVKCGEPLV (145 aa). Histidine 78 is a Zn(2+) binding site. The active site involves glutamate 79. A Zn(2+)-binding site is contributed by histidine 82.

It belongs to the SprT family. Zn(2+) serves as cofactor.

It is found in the cytoplasm. The chain is Protein SprT from Enterobacter sp. (strain 638).